The sequence spans 161 residues: Zinc finger protein KNUCKLES (161 aa).

The segment at 1-33 (MAEPPPSYLHFVGPAKTRSSSKRHSFSSSAHPA) is disordered. The segment at 38 to 60 (FPCQYCPRKFYTSQALGGHQNAH) adopts a C2H2-type zinc-finger fold. Positions 142-161 (GGNGVMEEDEPLDLDLSLRL) are disordered. The short motif at 155-159 (LDLSL) is the EAR-like (transcriptional repression) element.

First expressed in developing carpel primordia, and later in stamens and ovules of flower buds.

It is found in the nucleus. In terms of biological role, may function as a transcriptional repressor of cellular proliferation that regulates floral determinacy and relative size of basal pattern elements along the proximo-distal axis of the developing gynoecium. In Arabidopsis thaliana (Mouse-ear cress), this protein is Zinc finger protein KNUCKLES (KNU).